Here is a 374-residue protein sequence, read N- to C-terminus: uncharacterized protein (374 aa).

The N-terminal stretch at 1 to 26 (MNNLIKAYAAGVMSAAFLFGSEGRVR) is a signal peptide.

This is an uncharacterized protein from Treponema pallidum (strain Nichols).